Reading from the N-terminus, the 231-residue chain is NifU-like protein 1, chloroplastic (231 aa).

The transit peptide at 1 to 69 (MMASLATSIS…SSQGEKISPL (69 aa)) directs the protein to the chloroplast.

This sequence belongs to the NifU family. As to quaternary structure, homodimer; disulfide-linked. In terms of tissue distribution, predominantly expressed in floral stalks and siliques. Expressed in leaves, cauline leaves, flower stalks and flowers (at protein level).

The protein resides in the plastid. The protein localises to the chloroplast stroma. Its function is as follows. Molecular scaffold for [Fe-S] cluster assembly of chloroplastic iron-sulfur proteins. This Arabidopsis thaliana (Mouse-ear cress) protein is NifU-like protein 1, chloroplastic (NIFU1).